The chain runs to 248 residues: HTH-type transcriptional regulator GgaR (248 aa).

In terms of domain architecture, HTH gntR-type spans 22-90; sequence TPLYIKFAET…RGYGTQINNI (69 aa). Residues 50 to 69 constitute a DNA-binding region (H-T-H motif); the sequence is ERDLSQLTGVSRITVRKAMQ.

Its activity is regulated as follows. Senses ADP-glucose (ADPG), which is the substrate for glycogen elongation, as an effector. In the presence of ADPG, GgaR becomes inactive and derepresses the yegTUV operon, leading to glycogen accumulation. In contrast, in the absence of glucose, the concentration of ADPG decreases, GgaR becomes active, and glycogen accumulation is repressed. Its function is as follows. Transcriptional regulator that regulates glycogen accumulation in response to the amount of glucose available to the cell. Acts as a repressor of the yegTUV operon, which may be involved in glycogen accumulation. This chain is HTH-type transcriptional regulator GgaR, found in Escherichia coli O6:H1 (strain CFT073 / ATCC 700928 / UPEC).